We begin with the raw amino-acid sequence, 414 residues long: Probable acetyl-CoA acetyltransferase (414 aa).

C110 acts as the Acyl-thioester intermediate in catalysis. Residues Y205, 244–246 (KVL), and K249 each bind CoA. Y205 serves as a coordination point for K(+). The K(+) site is built by A266 and A268. Residue S269 participates in CoA binding. V366 is a K(+) binding site. Residues H370 and C400 each act as proton acceptor in the active site.

Belongs to the thiolase-like superfamily. Thiolase family.

The enzyme catalyses 2 acetyl-CoA = acetoacetyl-CoA + CoA. This is Probable acetyl-CoA acetyltransferase from Dictyostelium discoideum (Social amoeba).